Reading from the N-terminus, the 348-residue chain is SUMO-activating enzyme subunit 1 (348 aa).

The protein belongs to the ubiquitin-activating E1 family. As to quaternary structure, heterodimer of sae1 and uba2/sae2. The heterodimer corresponds to the two domains that are encoded on a single polypeptide chain in ubiquitin-activating enzyme E1. Interacts with ube2i.

Its subcellular location is the nucleus. It participates in protein modification; protein sumoylation. In terms of biological role, the heterodimer acts as an E1 ligase for sumo1, sumo2, and sumo3. It mediates ATP-dependent activation of sumo proteins followed by formation of a thioester bond between a sumo protein and a conserved active site cysteine residue on uba2/sae2. The protein is SUMO-activating enzyme subunit 1 (sae1) of Danio rerio (Zebrafish).